Here is a 264-residue protein sequence, read N- to C-terminus: Major prion protein (264 aa).

An N-terminal signal peptide occupies residues 1–24 (MVKSHIGSWILVLFVAMWSDVGLC). Residues 25 to 241 (KKRPKPGGGW…ESQAYYQRGA (217 aa)) are interaction with GRB2, ERI3 and SYN1. Positions 28-118 (PKPGGGWNTG…QWNKPSKPKT (91 aa)) are disordered. Low complexity predominate over residues 37-54 (GGSRYPGPGSPGGNRYPP). Repeat copies occupy residues 54 to 62 (PQGGGGWGQ), 63 to 70 (PHGGGWGQ), 71 to 78 (PHGGGWGQ), 79 to 86 (PHGGGWGQ), 87 to 94 (PHGGGWGQ), and 95 to 103 (PHGGGGWGQ). The interval 54–103 (PQGGGGWGQPHGGGWGQPHGGGWGQPHGGGWGQPHGGGWGQPHGGGGWGQ) is 6 X 8 AA tandem repeats of P-H-G-G-G-W-G-Q. The span at 55 to 107 (QGGGGWGQPHGGGWGQPHGGGWGQPHGGGWGQPHGGGWGQPHGGGGWGQGGTH) shows a compositional bias: gly residues. Cu(2+) contacts are provided by H72, G73, G74, H80, G81, G82, H88, G89, G90, H96, and G98. C190 and C225 are disulfide-bonded. 2 N-linked (GlcNAc...) asparagine glycosylation sites follow: N192 and N208. A lipid anchor (GPI-anchor amidated alanine) is attached at A241. Positions 242–264 (SVILFSSPPVILLISFLIFLIVG) are cleaved as a propeptide — removed in mature form.

It belongs to the prion family. Monomer and homodimer. Has a tendency to aggregate into amyloid fibrils containing a cross-beta spine, formed by a steric zipper of superposed beta-strands. Soluble oligomers may represent an intermediate stage on the path to fibril formation. Copper binding may promote oligomerization. Interacts with GRB2, APP, ERI3/PRNPIP and SYN1. Mislocalized cytosolically exposed PrP interacts with MGRN1; this interaction alters MGRN1 subcellular location and causes lysosomal enlargement. Interacts with KIAA1191.

The protein resides in the cell membrane. It localises to the golgi apparatus. Functionally, its primary physiological function is unclear. Has cytoprotective activity against internal or environmental stresses. May play a role in neuronal development and synaptic plasticity. May be required for neuronal myelin sheath maintenance. May play a role in iron uptake and iron homeostasis. Soluble oligomers are toxic to cultured neuroblastoma cells and induce apoptosis (in vitro). Association with GPC1 (via its heparan sulfate chains) targets PRNP to lipid rafts. Also provides Cu(2+) or Zn(2+) for the ascorbate-mediated GPC1 deaminase degradation of its heparan sulfate side chains. The protein is Major prion protein (PRNP) of Ailuropoda melanoleuca (Giant panda).